We begin with the raw amino-acid sequence, 234 residues long: Kappa-casein (234 aa).

An N-terminal signal peptide occupies residues 1 to 21; that stretch reads MMKSFLLVVNIVALTLPFLAA. Tandem repeats lie at residues 127–153, 154–179, and 180–207. The 3 X 27 AA tandem repeats stretch occupies residues 127–207; that stretch reads LGKATILSTD…AVPSEEPRES (81 aa). The tract at residues 143 to 234 is disordered; it reads QTPVSAAQPT…STGPAIASMA (92 aa). T144 carries an O-linked (GalNAc...) threonine glycan. The segment covering 144-171 has biased composition (polar residues); the sequence is TPVSAAQPTVSAGDTPEVSSQFIDTPDT. A Phosphothreonine modification is found at T158. Residue S162 is modified to Phosphoserine; alternate. A glycan (O-linked (GalNAc...) serine; alternate) is linked at S162.

The protein belongs to the kappa-casein family. Mammary gland specific. Secreted in milk.

It is found in the secreted. Functionally, kappa-casein stabilizes micelle formation, preventing casein precipitation in milk. The chain is Kappa-casein (CSN3) from Cavia porcellus (Guinea pig).